We begin with the raw amino-acid sequence, 637 residues long: Biosynthetic arginine decarboxylase (637 aa).

An N6-(pyridoxal phosphate)lysine modification is found at K101. Position 286-296 (286-296 (FDVGGGLAVDY)) interacts with substrate.

It belongs to the Orn/Lys/Arg decarboxylase class-II family. SpeA subfamily. Mg(2+) serves as cofactor. Requires pyridoxal 5'-phosphate as cofactor.

It carries out the reaction L-arginine + H(+) = agmatine + CO2. Its pathway is amine and polyamine biosynthesis; agmatine biosynthesis; agmatine from L-arginine: step 1/1. Functionally, catalyzes the biosynthesis of agmatine from arginine. This Shewanella sp. (strain ANA-3) protein is Biosynthetic arginine decarboxylase.